The chain runs to 408 residues: Tyrosine--tRNA ligase (408 aa).

The 'HIGH' region signature appears at 50-59 (PTGKDLTLGH). A 'KMSKS' region motif is present at residues 234–238 (KMSKS). Lys-237 contributes to the ATP binding site. The 62-residue stretch at 346 to 407 (MQAARVLFTA…GKRKYGRVVL (62 aa)) folds into the S4 RNA-binding domain.

Belongs to the class-I aminoacyl-tRNA synthetase family. TyrS type 2 subfamily. In terms of assembly, homodimer.

It localises to the cytoplasm. It carries out the reaction tRNA(Tyr) + L-tyrosine + ATP = L-tyrosyl-tRNA(Tyr) + AMP + diphosphate + H(+). Functionally, catalyzes the attachment of tyrosine to tRNA(Tyr) in a two-step reaction: tyrosine is first activated by ATP to form Tyr-AMP and then transferred to the acceptor end of tRNA(Tyr). This Symbiobacterium thermophilum (strain DSM 24528 / JCM 14929 / IAM 14863 / T) protein is Tyrosine--tRNA ligase.